Reading from the N-terminus, the 175-residue chain is NADH-ubiquinone oxidoreductase chain 6 (175 aa).

Helical transmembrane passes span 1-21, 24-44, 51-71, 87-107, 113-133, and 148-168; these read MMYIVFIMSVLYVVGFIGFSS, SPVYGGMSLIVSGGLGCGIIM, LGLVVFLVYLGGMMVVFGYTI, VVLSAFLVGLLMEIFMIVWLF, LVGFYFGGLEDLVVLGEGSFG, and YGFWFLAMAGWMLFVSIFIAI.

The protein belongs to the complex I subunit 6 family. In terms of assembly, core subunit of respiratory chain NADH dehydrogenase (Complex I) which is composed of 45 different subunits.

The protein localises to the mitochondrion inner membrane. It carries out the reaction a ubiquinone + NADH + 5 H(+)(in) = a ubiquinol + NAD(+) + 4 H(+)(out). Functionally, core subunit of the mitochondrial membrane respiratory chain NADH dehydrogenase (Complex I) which catalyzes electron transfer from NADH through the respiratory chain, using ubiquinone as an electron acceptor. Essential for the catalytic activity and assembly of complex I. This chain is NADH-ubiquinone oxidoreductase chain 6 (MT-ND6), found in Mammuthus primigenius (Siberian woolly mammoth).